The chain runs to 179 residues: Large ribosomal subunit protein uL5 (179 aa).

The protein belongs to the universal ribosomal protein uL5 family. Part of the 50S ribosomal subunit; part of the 5S rRNA/L5/L18/L25 subcomplex. Contacts the 5S rRNA and the P site tRNA. Forms a bridge to the 30S subunit in the 70S ribosome.

In terms of biological role, this is one of the proteins that bind and probably mediate the attachment of the 5S RNA into the large ribosomal subunit, where it forms part of the central protuberance. In the 70S ribosome it contacts protein S13 of the 30S subunit (bridge B1b), connecting the 2 subunits; this bridge is implicated in subunit movement. Contacts the P site tRNA; the 5S rRNA and some of its associated proteins might help stabilize positioning of ribosome-bound tRNAs. The sequence is that of Large ribosomal subunit protein uL5 from Pseudomonas paraeruginosa (strain DSM 24068 / PA7) (Pseudomonas aeruginosa (strain PA7)).